Reading from the N-terminus, the 864-residue chain is Disintegrin and metalloproteinase domain-containing protein 15 (864 aa).

The N-terminal stretch at 1 to 17 (MRLALLWALGLLGAGSP) is a signal peptide. The segment at 17–49 (PRPSPPLPNIGGTEEEQQASPERTQSRSLENQV) is disordered. The propeptide occupies 18-208 (RPSPPLPNIG…EQHHLRRLKR (191 aa)). Over residues 34 to 49 (QASPERTQSRSLENQV) the composition is skewed to polar residues. N-linked (GlcNAc...) asparagine glycosylation is present at N57. The Cysteine switch signature appears at 178 to 185 (HTCAPSWH). C180 lines the Zn(2+) pocket. At 209–698 (DVVTETKIVE…QLRATSSLTT (490 aa)) the chain is on the extracellular side. Positions 215–416 (KIVELVIVAD…GMGSCLFEWP (202 aa)) constitute a Peptidase M12B domain. Residue N239 is glycosylated (N-linked (GlcNAc...) asparagine). Intrachain disulfides connect C325–C411, C367–C395, C369–C378, and C482–C502. H350 contacts Zn(2+). Residue E351 is part of the active site. Residues H354 and H360 each coordinate Zn(2+). N-linked (GlcNAc...) asparagine glycosylation is found at N391 and N394. One can recognise a Disintegrin domain in the interval 423–510 (SSLCGNMFVD…QCPPDIRLGD (88 aa)). 2 N-linked (GlcNAc...) asparagine glycosylation sites follow: N608 and N613. Disulfide bonds link C659–C669, C663–C675, and C677–C686. Positions 659–687 (CRSKCHGHGVCDSSRHCHCDEGWAPPDCM) constitute an EGF-like domain. The chain crosses the membrane as a helical span at residues 699-719 (GLLLSLLLLLVLVLLGASYWY). A phosphotyrosine; by HCK and LCK mark is found at Y717 and Y737. Residues 720–864 (RARLHQRLCQ…PPPAASSLYL (145 aa)) lie on the Cytoplasmic side of the membrane. Residues 738-864 (RAAQSGPPER…PPPAASSLYL (127 aa)) form a disordered region. Residues 753–765 (RAQQMPGTKQANV) show a composition bias toward polar residues. Composition is skewed to pro residues over residues 768 to 780 (PVPP…PNPV) and 810 to 825 (PQGP…PLPA). The SH3-binding motif lies at 816–822 (PPPPRKP). A compositionally biased stretch (low complexity) spans 826–850 (NPQGRPPLGDLPGPGDGSLQLVVPS). Residues 851–857 (RPAPPPP) carry the SH3-binding motif.

In terms of assembly, interacts with ITAGV-ITGB3 (vitronectin receptor). Interacts with SH3GL2 and SNX9; this interaction occurs preferentially with ADAM15 precursor, rather than the processed form, suggesting it occurs in a secretory pathway compartment prior to the medial Golgi. Interacts with ITAG9-ITGB1. Interacts specifically with Src family protein-tyrosine kinases (PTKs). Interacts with SH3PXD2A. Interacts with ITAGV-ITGB1. Interacts with GRB2, HCK, ITSN1, ITSN2, LYN, MAPK1, MAPK3, NCF1, NCK1, nephrocystin, PTK6, SNX33, LCK and SRC. It depends on Zn(2+) as a cofactor. In terms of processing, the precursor is cleaved by a furin endopeptidase. Post-translationally, phosphorylation increases association with PTKs. In terms of tissue distribution, predominantly expressed in brain, spinal cord, sciatic nerve and lung. Expressed at lower levels in all other tissues. In the peripheral nervous system, expressed predominantly by Schwann cells. In the central nervous system, preferentially expressed by neuronal cells.

It localises to the endomembrane system. It is found in the cell junction. The protein resides in the adherens junction. The protein localises to the cell projection. Its subcellular location is the cilium. It localises to the flagellum. It is found in the cytoplasmic vesicle. The protein resides in the secretory vesicle. The protein localises to the acrosome. Active metalloproteinase with gelatinolytic and collagenolytic activity. Plays a role in the wound healing process. Mediates both heterotypic intraepithelial cell/T-cell interactions and homotypic T-cell aggregation. Inhibits beta-1 integrin-mediated cell adhesion and migration of airway smooth muscle cells. Suppresses cell motility on or towards fibronectin possibly by driving alpha-v/beta-1 integrin (ITAGV-ITGB1) cell surface expression via ERK1/2 inactivation. Cleaves E-cadherin in response to growth factor deprivation. Plays a role in glomerular cell migration. Plays a role in pathological neovascularization. May play a role in cartilage remodeling. May be proteolytically processed, during sperm epididymal maturation and the acrosome reaction. May play a role in sperm-egg binding through its disintegrin domain. The protein is Disintegrin and metalloproteinase domain-containing protein 15 (Adam15) of Rattus norvegicus (Rat).